Reading from the N-terminus, the 629-residue chain is Dehydrogenase pyvF (629 aa).

The N-terminal stretch at 1-22 (MAGSPFTTALLSAWTLSTVAVG) is a signal peptide. FAD is bound by residues 61–62 (AS) and 82–83 (EA). Asparagine 92 carries N-linked (GlcNAc...) asparagine glycosylation. 144-147 (NLMA) is a binding site for FAD. 6 N-linked (GlcNAc...) asparagine glycosylation sites follow: asparagine 172, asparagine 182, asparagine 256, asparagine 284, asparagine 312, and asparagine 421. Histidine 552 (proton acceptor) is an active-site residue. FAD contacts are provided by residues alanine 586 and 597–598 (PL).

Belongs to the GMC oxidoreductase family. Homodimer. Requires FAD as cofactor.

It participates in secondary metabolite biosynthesis. Functionally, dehydrogenase; part of the gene cluster that mediates the biosynthesis of pyranoviolin A, a pyranonigrin analog with a C-3 methoxy group. Initially, the PKS portion of pyvA synthesizes C-10 carbon chain from 5 molecules of malonyl-CoA, which is then condensed with the thiolation (T) domain-bound glycine activated by the adenylation (A) domain. The subsequent chain release by Dieckmann condensation (DKC) could be catalyzed by the TE domain present at the C-terminus of pyvA and/or the alpha/beta hydrolase pyvD, installing the tetramic acid moiety. The FAD-dependent monooxygenase pyvC next epoxidizes one of the olefins of the polyketide part, and the epoxide ring-opening induces the dihydro-gamma-pyrone ring formation. The cytochrome P450 monooxygeanse pyvB would be responsible for the 2 consecutive reactions, in which the dihydro-gamma-pyrone is oxidized to gamma-pyrone and C-7 is hydroxylated to yield pyranonigrin F. Finally, the O-methyltransferase pyvH methylates the C-3 hydroxy group to complete the biosynthesis. The sequence is that of Dehydrogenase pyvF from Aspergillus violaceofuscus (strain CBS 115571).